The sequence spans 407 residues: Sensor histidine kinase YdfH (407 aa).

The Cytoplasmic portion of the chain corresponds to 1-25; that stretch reads MLIRNPFKDKYYSHDRRALNMLALR. The next 2 helical transmembrane spans lie at 26 to 46 and 47 to 67; these read VPGL…QFVS and GGWS…FALL. Residues 68–78 are Cytoplasmic-facing; that stretch reads HWHSYRWVKKR. 2 consecutive transmembrane segments (helical) span residues 79 to 99 and 100 to 120; these read VILY…LMTG and FFIL…IGMA. Topologically, residues 121-125 are cytoplasmic; that stretch reads DRRRT. The helical transmembrane segment at 126-146 threads the bilayer; it reads FLILYLLLLLVINSAYHLHKG. The Extracellular portion of the chain corresponds to 147–150; it reads EVLH. The helical transmembrane segment at 151 to 171 threads the bilayer; sequence FIVIAAPIMIVIITYAATFFA. Residues 172-407 lie on the Cytoplasmic side of the membrane; that stretch reads QVDEKIKAQL…VPIQGEMQDE (236 aa). The region spanning 201 to 402 is the Histidine kinase domain; it reads ERQRMARDLH…QIEITVPIQG (202 aa). Histidine 210 carries the post-translational modification Phosphohistidine; by autocatalysis.

The protein localises to the cell membrane. The catalysed reaction is ATP + protein L-histidine = ADP + protein N-phospho-L-histidine.. Functionally, member of the two-component regulatory system YdfH/YdfI. May activate YdfI by phosphorylation. The chain is Sensor histidine kinase YdfH (ydfH) from Bacillus subtilis (strain 168).